Here is a 142-residue protein sequence, read N- to C-terminus: Hemoglobin subunit alpha 1 (142 aa).

The residue at position 1 (S1) is an N-acetylserine. Residues 1–142 (SLSDKDKAAV…VSLALSERYR (142 aa)) form the Globin domain. Position 59 (H59) interacts with O2. H88 provides a ligand contact to heme b.

Belongs to the globin family. In terms of assembly, hb1 is a heterotetramer of two alpha-1 chains and two beta-1 chains. Hb2 is a heterotetramer of two alpha-2 chains and two beta-1 chains. HbC is a heterotetramer of two alpha-1 chains and two beta-2 chains. Red blood cells.

Involved in oxygen transport from gills to the various peripheral tissues. The protein is Hemoglobin subunit alpha 1 of Eleginops maclovinus (Patagonian blennie).